Consider the following 317-residue polypeptide: MKVLWAALLVTFLAGCQAKVEQVVETEPEPELHQQAEWQSGQRWELALGHFWDYLRWVQTLSEQVQEELLSSQVTQELTALMDETMKELKAYKSELEEQLTPVAEETRARLSKELQAAQARLGADMEDVRGRLVQYRGEVQAMLGQSTEELRARLASHLRKLRKRLLRDADDLQKRLAVYQAGAREGAERGVSAIRERLGPLVEQGRVRAATVGSLAGQPLQERAQAWGERLRARMEEMGSRTRDRLDEVKEQVAEVRAKLEEQAQQIRLQAEAFQARLKSWFEPLVEDMQRQWAGLVEKVQAAMGTSAAPVPSDNH.

A signal peptide spans 1–18; sequence MKVLWAALLVTFLAGCQA. 8 repeat units span residues 80-101, 102-123, 124-145, 146-167, 168-189, 190-211, 212-233, and 234-255. Residues 80–255 are 8 X 22 AA approximate tandem repeats; sequence ALMDETMKEL…RLDEVKEQVA (176 aa). Methionine 143 carries the post-translational modification Methionine sulfoxide. Serine 147 bears the Phosphoserine mark. The segment at 158-168 is LDL and other lipoprotein receptors binding; that stretch reads HLRKLRKRLLR. 162-165 serves as a coordination point for heparin; the sequence is LRKR. The segment at 210–290 is lipid-binding and lipoprotein association; the sequence is AATVGSLAGQ…SWFEPLVEDM (81 aa). Residue 229-236 coordinates heparin; the sequence is GERLRARM. Positions 266 to 317 are homooligomerization; the sequence is QQIRLQAEAFQARLKSWFEPLVEDMQRQWAGLVEKVQAAMGTSAAPVPSDNH. The segment at 278–290 is specificity for association with VLDL; sequence RLKSWFEPLVEDM.

This sequence belongs to the apolipoprotein A1/A4/E family. As to quaternary structure, homotetramer. May interact with ABCA1; functionally associated with ABCA1 in the biogenesis of HDLs. May interact with APP/A4 amyloid-beta peptide; the interaction is extremely stable in vitro but its physiological significance is unclear. May interact with MAPT. May interact with MAP2. In the cerebrospinal fluid, interacts with secreted SORL1. Interacts with PMEL; this allows the loading of PMEL luminal fragment on ILVs to induce fibril nucleation. APOE exists as multiple glycosylated and sialylated glycoforms within cells and in plasma. The extent of glycosylation and sialylation are tissue and context specific. In terms of processing, glycated in plasma VLDL. Post-translationally, phosphorylated by FAM20C in the extracellular medium.

The protein localises to the secreted. It is found in the extracellular space. The protein resides in the extracellular matrix. Its subcellular location is the extracellular vesicle. It localises to the endosome. The protein localises to the multivesicular body. Its function is as follows. APOE is an apolipoprotein, a protein associating with lipid particles, that mainly functions in lipoprotein-mediated lipid transport between organs via the plasma and interstitial fluids. APOE is a core component of plasma lipoproteins and is involved in their production, conversion and clearance. Apolipoproteins are amphipathic molecules that interact both with lipids of the lipoprotein particle core and the aqueous environment of the plasma. As such, APOE associates with chylomicrons, chylomicron remnants, very low density lipoproteins (VLDL) and intermediate density lipoproteins (IDL) but shows a preferential binding to high-density lipoproteins (HDL). It also binds a wide range of cellular receptors including the LDL receptor/LDLR, the LDL receptor-related proteins LRP1, LRP2 and LRP8 and the very low-density lipoprotein receptor/VLDLR that mediate the cellular uptake of the APOE-containing lipoprotein particles. Finally, APOE also has a heparin-binding activity and binds heparan-sulfate proteoglycans on the surface of cells, a property that supports the capture and the receptor-mediated uptake of APOE-containing lipoproteins by cells. A main function of APOE is to mediate lipoprotein clearance through the uptake of chylomicrons, VLDLs, and HDLs by hepatocytes. APOE is also involved in the biosynthesis by the liver of VLDLs as well as their uptake by peripheral tissues ensuring the delivery of triglycerides and energy storage in muscle, heart and adipose tissues. By participating in the lipoprotein-mediated distribution of lipids among tissues, APOE plays a critical role in plasma and tissues lipid homeostasis. APOE is also involved in two steps of reverse cholesterol transport, the HDLs-mediated transport of cholesterol from peripheral tissues to the liver, and thereby plays an important role in cholesterol homeostasis. First, it is functionally associated with ABCA1 in the biogenesis of HDLs in tissues. Second, it is enriched in circulating HDLs and mediates their uptake by hepatocytes. APOE also plays an important role in lipid transport in the central nervous system, regulating neuron survival and sprouting. This is Apolipoprotein E (APOE) from Pan troglodytes (Chimpanzee).